A 1518-amino-acid polypeptide reads, in one-letter code: Hormone receptor 4 (1518 aa).

Disordered stretches follow at residues 30–50, 145–327, 380–587, 672–820, and 887–913; these read RCSS…DLLA, TSST…KLSE, PSRI…QPQA, VGVG…SSVA, and SSNS…EPTD. The segment covering 34–46 has biased composition (polar residues); it reads DGESIADTSTSSP. 2 stretches are compositionally biased toward low complexity: residues 145–189 and 208–219; these read TSST…SSSG and SSSSAISAAAAS. Positions 238-260 are enriched in gly residues; sequence EGGGPAGDGSGATGGGNTSGGST. Residues 291 to 323 show a composition bias toward low complexity; the sequence is STTTTTGRPTLTPTNGVLSSASAGTGISTGSSA. Over residues 400 to 429 the composition is skewed to basic and acidic residues; it reads QRERERERDRERDRERERERDRDREREREQ. Polar residues-rich tracts occupy residues 430-451 and 475-489; these read SISS…QLSH and RKSS…SQSM. Low complexity-rich tracts occupy residues 490–529, 546–586, 681–705, and 738–799; these read QHLT…PHSL, HHQQ…QQPQ, GSVQ…QTPS, and GQSH…PSSS. Composition is skewed to gly residues over residues 800–812 and 892–902; these read SGGG…GVGG and GLGGVGGGMGG. Residues 918-993 constitute a DNA-binding region (nuclear receptor); that stretch reads PLVCMICEDK…QGMVLQAVRE (76 aa). 2 consecutive NR C4-type zinc fingers follow at residues 921–941 and 957–976; these read CMIC…CEGC and CVAD…CQYC. 3 disordered regions span residues 1015 to 1101, 1142 to 1210, and 1341 to 1371; these read KHKK…AAVA, LLQA…LPPH, and KRRG…STPI. The segment covering 1021-1060 has biased composition (low complexity); the sequence is QKQQQQAAQQQQQQAAAQQQHQQQQQHQQHQQHQQQQLHS. Basic residues predominate over residues 1061-1077; that stretch reads PLHHHHHQGHQSHHAQQ. Composition is skewed to low complexity over residues 1078–1101 and 1144–1193; these read QHHP…AAVA and QAPP…HHQQ. Positions 1194 to 1205 are enriched in gly residues; that stretch reads QGGGGGGAGGGA. The 269-residue stretch at 1250-1518 folds into the NR LBD domain; sequence HALGMIQTLI…PFVLNSASIR (269 aa). The segment covering 1351–1368 has biased composition (low complexity); it reads HGSPASTPLSTPTGTPLS.

This sequence belongs to the nuclear hormone receptor family. NR1 subfamily. In terms of tissue distribution, during L2 and L3 stages, strong constitutive expression is seen in the ring gland. Lower expression is detected in specific neurons of the central nervous system (CNS) (at protein level).

It is found in the nucleus. Coordinates growth and maturation by mediating endocrine responses to the attainment of critical weight during larval development. Plays a central role in the genetic cascades triggered by the steroid hormone ecdysone at the onset of metamorphosis, acting as both a repressor of the early ecdysone-induced regulatory genes and an inducer of the ftz-f1 midprepupal competence factor. This Drosophila melanogaster (Fruit fly) protein is Hormone receptor 4 (Hr4).